An 859-amino-acid polypeptide reads, in one-letter code: Homeobox-leucine zipper protein HOX32 (859 aa).

Residues 7–31 (AAVHGVGRQDRSSPGGGGAPQVDTG) are disordered. Residues 29-92 (DTGKYVRYTP…NRRCREKQRK (64 aa)) constitute a DNA-binding region (homeobox). A coiled-coil region spans residues 100-129 (VNRKLTAMNKLLMEENDRLQKQVSRLVYEN). The span at 146–164 (TSCESVVTSGQHHQQQNPA) shows a compositional bias: polar residues. The disordered stretch occupies residues 146–172 (TSCESVVTSGQHHQQQNPAATRPQRDA). Residues 171–393 (DANNPAGLLA…LRHIRQIAHE (223 aa)) enclose the START domain.

This sequence belongs to the HD-ZIP homeobox family. Class III subfamily. In terms of tissue distribution, expressed in seedlings, roots, stems, leaf sheaths and blades and panicles.

The protein localises to the nucleus. In terms of biological role, probable transcription factor. In Oryza sativa subsp. japonica (Rice), this protein is Homeobox-leucine zipper protein HOX32 (HOX32).